The following is a 234-amino-acid chain: HTH-type transcriptional regulator SmoD (234 aa).

One can recognise an HTH gntR-type domain in the interval 8–76 (LPMYMQIAEM…QGSGNYIRAV (69 aa)). Positions 36–55 (ERDMAADLGIAVGTLRKSLA) form a DNA-binding region, H-T-H motif.

Its subcellular location is the cytoplasm. Probably regulates expression of genes involved in the sulfoquinovose monooxygenase (sulfo-SMO) pathway (smoABCDEFGHI). This chain is HTH-type transcriptional regulator SmoD, found in Agrobacterium fabrum (strain C58 / ATCC 33970) (Agrobacterium tumefaciens (strain C58)).